Here is a 311-residue protein sequence, read N- to C-terminus: Manganese-dependent ADP-ribose/CDP-alcohol diphosphatase (311 aa).

7 residues coordinate Zn(2+): Asp17, Gln19, Asp64, Asn99, His218, His255, and His257.

Belongs to the ADPRibase-Mn family. In terms of assembly, monomer. Mg(2+) is required as a cofactor.

The catalysed reaction is CDP-choline + H2O = phosphocholine + CMP + 2 H(+). It catalyses the reaction ADP-D-ribose + H2O = D-ribose 5-phosphate + AMP + 2 H(+). It carries out the reaction CDP-glycerol + H2O = sn-glycerol 3-phosphate + CMP + 2 H(+). Functionally, hydrolyzes ADP-ribose, IDP-ribose, CDP-glycerol, CDP-choline and CDP-ethanolamine, but not other non-reducing ADP-sugars or CDP-glucose. This Arabidopsis thaliana (Mouse-ear cress) protein is Manganese-dependent ADP-ribose/CDP-alcohol diphosphatase.